Here is a 168-residue protein sequence, read N- to C-terminus: Photosystem I assembly protein Ycf3 (168 aa).

TPR repeat units lie at residues 35-68 (AFTY…EIDP), 72-105 (SYIL…NPFL), and 120-153 (GEQA…TPGN).

It belongs to the Ycf3 family.

It is found in the plastid. The protein resides in the chloroplast thylakoid membrane. Functionally, essential for the assembly of the photosystem I (PSI) complex. May act as a chaperone-like factor to guide the assembly of the PSI subunits. The protein is Photosystem I assembly protein Ycf3 of Daucus carota (Wild carrot).